Reading from the N-terminus, the 145-residue chain is Probable low molecular weight protein-tyrosine-phosphatase EpsP (145 aa).

Catalysis depends on Cys-9, which acts as the Nucleophile. The active site involves Arg-15. Asp-114 (proton donor) is an active-site residue.

It belongs to the low molecular weight phosphotyrosine protein phosphatase family.

It catalyses the reaction O-phospho-L-tyrosyl-[protein] + H2O = L-tyrosyl-[protein] + phosphate. The protein operates within glycan metabolism; exopolysaccharide biosynthesis. In terms of biological role, may be involved in assembly or function of the EPS I polymerization/export complex and/or the EpsB ATPase. Alternatively it may function in the removal of the terminal phosphate from C55-isoprenyl pyrophosphate in order to recycle the C55-isoprenyl phosphate lipid carrier used in the synthesis of polysaccharide repeat units. The polypeptide is Probable low molecular weight protein-tyrosine-phosphatase EpsP (epsP) (Ralstonia nicotianae (strain ATCC BAA-1114 / GMI1000) (Ralstonia solanacearum)).